Consider the following 382-residue polypeptide: Type II secretion system protein L (382 aa).

Over methionine 1–arginine 233 the chain is Cytoplasmic. Residues proline 234–alanine 254 form a helical membrane-spanning segment. Over tryptophan 255–glycine 382 the chain is Periplasmic.

Belongs to the GSP L family. As to quaternary structure, type II secretion system is composed of four main components: the outer membrane complex, the inner membrane complex, the cytoplasmic secretion ATPase and the periplasm-spanning pseudopilus. Forms homodimers. Interacts with XcpZ/GspM. Interacts with XcpR/GspE and XcpS/GspF.

The protein resides in the cell inner membrane. In terms of biological role, inner membrane component of the type II secretion system required for the energy-dependent secretion of extracellular factors such as proteases and toxins from the periplasm. Plays a role in the complex assembly and recruits XcpZ resulting in a stable complex in the inner membrane. Provides thus a link between the energy-providing XcpR protein in the cytoplasm and the rest of the T2SS machinery. This is Type II secretion system protein L (xcpY) from Pseudomonas aeruginosa (strain ATCC 15692 / DSM 22644 / CIP 104116 / JCM 14847 / LMG 12228 / 1C / PRS 101 / PAO1).